The following is a 239-amino-acid chain: MSRDPILSLPWPDARPLPDTFFDRDALLVARELLGKVIRHRQGNLWLAARIIETEAYYLEEKGSHASLGYTEKRKALFLDGGHIYMYYARGGDSLNFSAGGPGNAVLIKSGHPWLDRISDHTALERMQSLNPDSQGRPREIGRLCAGQTLLCKAMGLKVPEWDAQRFDPQRLFVDDVGERPSQVIQAARLGIPKGRDEHLPYRFVDAAFAAFCTRNPLRRGQVAGRDYHLLGHQDPHLQ.

The protein belongs to the DNA glycosylase MPG family.

The protein is Putative 3-methyladenine DNA glycosylase of Pseudomonas aeruginosa (strain ATCC 15692 / DSM 22644 / CIP 104116 / JCM 14847 / LMG 12228 / 1C / PRS 101 / PAO1).